The sequence spans 180 residues: Large ribosomal subunit protein uL5 (180 aa).

It belongs to the universal ribosomal protein uL5 family. As to quaternary structure, part of the 50S ribosomal subunit; part of the 5S rRNA/L5/L18/L25 subcomplex. Contacts the 5S rRNA and the P site tRNA. Forms a bridge to the 30S subunit in the 70S ribosome.

This is one of the proteins that bind and probably mediate the attachment of the 5S RNA into the large ribosomal subunit, where it forms part of the central protuberance. In the 70S ribosome it contacts protein S13 of the 30S subunit (bridge B1b), connecting the 2 subunits; this bridge is implicated in subunit movement. Contacts the P site tRNA; the 5S rRNA and some of its associated proteins might help stabilize positioning of ribosome-bound tRNAs. The sequence is that of Large ribosomal subunit protein uL5 from Streptococcus pneumoniae (strain JJA).